The chain runs to 538 residues: Neutral protease B (538 aa).

A signal peptide spans 1–28; the sequence is MRNLTKTSLLLAGLCTAAQMVFVTHASA. A propeptide spans 29-223 (activation peptide); that stretch reads EESIEYDHTY…VIESFNAIHE (195 aa). Asp365 serves as a coordination point for Ca(2+). His369 contacts Zn(2+). Glu370 is a catalytic residue. Residues His373 and Glu393 each coordinate Zn(2+). 9 residues coordinate Ca(2+): Asp404, Asp406, Asp407, Glu409, Glu412, Tyr415, Thr416, Ile419, and Asp422. The tract at residues 421–441 is disordered; it reads GDSLRSLEDPSKQGNPDHYSN. His453 serves as the catalytic Proton donor.

Belongs to the peptidase M4 family. Zn(2+) is required as a cofactor.

Its subcellular location is the secreted. With respect to regulation, protease activity can be inhibited in vitro by either a zinc specific chelator, 1,10-phenanthroline, or a metal chelator, EDTA. The enzyme is resistant to phenylmethylsulfonyl fluoride and iodoacetic acid. Protease able to cleave casein in vitro. This is Neutral protease B from Bacillus subtilis (strain 168).